Reading from the N-terminus, the 1013-residue chain is NHS-like protein 3 (1013 aa).

Position 17 is a phosphoserine (Lys-17). The disordered stretch occupies residues 20–195 (SAKAESDNRQ…PPGSRDAVRI (176 aa)). The segment covering 73-89 (QHQERQKLSKGGWDHGD) has biased composition (basic and acidic residues). 2 stretches are compositionally biased toward polar residues: residues 90–99 (TQSIQSSQTG) and 106–120 (SIYS…SSTA). At Ser-92 the chain carries Phosphoserine. Tyr-108 bears the Phosphotyrosine mark. Residues Ser-136, Ser-143, and Ser-159 each carry the phosphoserine modification. Residue Thr-160 is modified to Phosphothreonine. Positions 168-178 (VQKELGLRNNR) are enriched in basic and acidic residues. The residue at position 213 (Ser-213) is a Phosphoserine. At Arg-318 the chain carries Asymmetric dimethylarginine. Residues Ser-320, Ser-325, Ser-328, Ser-336, Ser-337, Ser-339, and Ser-340 each carry the phosphoserine modification. Residues 330–1013 (RSLGRFSSAS…PGSDPQKKLV (684 aa)) are disordered. The span at 336 to 361 (SSASSPRPRSRNASSSSDNWSHSQSS) shows a compositional bias: low complexity. Polar residues predominate over residues 362–375 (ETIVSDGSTLSSKG). Phosphoserine occurs at positions 398, 402, and 407. A compositionally biased stretch (polar residues) spans 408-427 (TAETSDTASIRSSGQLSGRS). Composition is skewed to low complexity over residues 484–493 (VGAVSCPPSS) and 515–530 (RTLS…SGTP). Thr-529 carries the phosphothreonine modification. At Ser-543 the chain carries Phosphoserine. Over residues 564-577 (SVSSSLTSLCSSSS) the composition is skewed to low complexity. Thr-591 is modified (phosphothreonine). A compositionally biased stretch (pro residues) spans 600–614 (PPHPKVPAPFSPPPS). Ser-610 carries the post-translational modification Phosphoserine. The span at 615–633 (KSKSSNQAAPVLAAPAVAP) shows a compositional bias: low complexity. The segment covering 635–657 (QVSTIDTSPASPSMPQTTLTPAQ) has biased composition (polar residues). 2 positions are modified to phosphoserine: Ser-667 and Ser-671. 2 stretches are compositionally biased toward pro residues: residues 668–683 (PPPS…PPPT) and 706–716 (PSWPPPPPPAP). Positions 779-795 (PQKDSVGKHSGAPREDS) are enriched in basic and acidic residues. The segment covering 814-829 (GASTGIPNPSPGSSAP) has biased composition (polar residues). 3 positions are modified to phosphoserine: Ser-838, Ser-842, and Ser-848. Residues 859–873 (ASSLAASESPASALP) are compositionally biased toward low complexity. Phosphoserine occurs at positions 909, 952, and 959. Pro residues predominate over residues 942-961 (KAPPPVARKPSVGVPPPSPS). Over residues 964–975 (RTESLTAPSTNG) the composition is skewed to polar residues.

Its function is as follows. Able to directly activate the TNF-NFkappaB signaling pathway. The sequence is that of NHS-like protein 3 (Nhsl3) from Mus musculus (Mouse).